We begin with the raw amino-acid sequence, 126 residues long: Protein Wnt-7(II) (126 aa).

Ser-1 carries the O-palmitoleoyl serine; by PORCN lipid modification. Cys-92 and Cys-107 are joined by a disulfide. Asn-93 carries N-linked (GlcNAc...) asparagine glycosylation.

Belongs to the Wnt family. In terms of processing, palmitoleoylation is required for efficient binding to frizzled receptors. Depalmitoleoylation leads to Wnt signaling pathway inhibition.

It localises to the secreted. The protein resides in the extracellular space. Its subcellular location is the extracellular matrix. Ligand for members of the frizzled family of seven transmembrane receptors. Probable developmental protein. May be a signaling molecule which affects the development of discrete regions of tissues. Is likely to signal over only few cell diameters. This Eptatretus stoutii (Pacific hagfish) protein is Protein Wnt-7(II) (WNT-7(II)).